The primary structure comprises 516 residues: Coiled-coil domain-containing protein 82 (516 aa).

Basic residues predominate over residues 1-13; the sequence is MVHARRHETRKNS. The disordered stretch occupies residues 1-265; the sequence is MVHARRHETR…DYGDAENEDD (265 aa). Residues 38-62 are compositionally biased toward acidic residues; it reads DSDEELDSDEEIGSDEDLDGGESID. The span at 78–96 shows a compositional bias: basic and acidic residues; that stretch reads IPEKETELNLIKVESERSN. The span at 98 to 107 shows a compositional bias: polar residues; the sequence is KCHMNTSSSS. The span at 113–135 shows a compositional bias: basic and acidic residues; sequence MNKTKHNDLPDDEAHPGQAEGHH. Phosphoserine is present on residues serine 170 and serine 194. The residue at position 202 (threonine 202) is a Phosphothreonine. The stretch at 204-232 forms a coiled coil; the sequence is EKSPAARKREYHQKLQELCERSRQKQRHN. Over residues 215 to 226 the composition is skewed to basic and acidic residues; sequence HQKLQELCERSR. Over residues 248-265 the composition is skewed to acidic residues; the sequence is TDEDEDDDDYGDAENEDD. Serine 301 is subject to Phosphoserine.

This is Coiled-coil domain-containing protein 82 (Ccdc82) from Rattus norvegicus (Rat).